We begin with the raw amino-acid sequence, 320 residues long: Protein PXR1 (320 aa).

Positions 1-11 (MGLAGPRKRTK) are enriched in basic residues. Residues 1 to 24 (MGLAGPRKRTKISHDPNNTAWSRS) form a disordered region. The span at 15 to 24 (DPNNTAWSRS) shows a compositional bias: polar residues. The region spanning 25 to 79 (TSGYGHKIMSAQGWTPGSFLGASNAAHADHFTAGSAGHIRVILKDDNLGLGAKLR) is the G-patch domain. The segment at 152 to 298 (GEEVQTPQIS…MGRQFTRGRH (147 aa)) is disordered. A compositionally biased stretch (basic residues) spans 169–182 (KRPKKARKKEKRRA). 3 stretches are compositionally biased toward basic and acidic residues: residues 203–214 (RKENKEKKKSSD), 243–256 (KDPE…HDDS), and 269–288 (QESR…EHRP).

This sequence belongs to the PINX1 family.

It is found in the nucleus. The protein localises to the nucleolus. Functionally, involved in rRNA-processing at A0, A1 and A2 sites and negatively regulates telomerase. The chain is Protein PXR1 (PXR1) from Ajellomyces capsulatus (strain NAm1 / WU24) (Darling's disease fungus).